The primary structure comprises 254 residues: Protein CbbY, plasmid (254 aa).

Belongs to the HAD-like hydrolase superfamily. CbbY/CbbZ/Gph/YieH family.

This Cupriavidus necator (strain ATCC 17699 / DSM 428 / KCTC 22496 / NCIMB 10442 / H16 / Stanier 337) (Ralstonia eutropha) protein is Protein CbbY, plasmid (cbbYP).